We begin with the raw amino-acid sequence, 417 residues long: Mast cell carboxypeptidase A (417 aa).

Positions 1 to 15 (MRFFLLMAVIYTTLA) are cleaved as a signal peptide. Positions 16–109 (IAPVHFDREK…IEKQFDVKDE (94 aa)) are cleaved as a propeptide — activation peptide. Residues 118–412 (KYNDWDKIVS…LSVKFIAKYI (295 aa)) enclose the Peptidase M14 domain. 2 cysteine pairs are disulfide-bonded: C173–C186 and C245–C268. Zn(2+)-binding residues include H176 and E179. H304 contacts Zn(2+). The active-site Proton donor/acceptor is E378.

Belongs to the peptidase M14 family. Zn(2+) serves as cofactor.

The protein resides in the cytoplasmic vesicle. The protein localises to the secretory vesicle. The enzyme catalyses Release of a C-terminal amino acid, but little or no action with -Asp, -Glu, -Arg, -Lys or -Pro.. In Mus musculus (Mouse), this protein is Mast cell carboxypeptidase A (Cpa3).